A 123-amino-acid chain; its full sequence is Large ribosomal subunit protein uL29 (123 aa).

Belongs to the universal ribosomal protein uL29 family. As to quaternary structure, component of the large ribosomal subunit.

Its subcellular location is the cytoplasm. In terms of biological role, component of the large ribosomal subunit. The ribosome is a large ribonucleoprotein complex responsible for the synthesis of proteins in the cell. Plays an essential role in early embryonic development. May act as a haploinsufficient tumor suppressor. This chain is Large ribosomal subunit protein uL29 (rpl35), found in Danio rerio (Zebrafish).